A 101-amino-acid polypeptide reads, in one-letter code: Transcription factor ILI2 (101 aa).

The interval 1-22 (MSSSRRSRTSSRLAAAPPPTDE) is disordered. The 56-residue stretch at 8 to 63 (RTSSRLAAAPPPTDEQMAELISKLQAVLPTRGGEANAKQASSAEVLQEACRYIRRL) folds into the bHLH domain.

Belongs to the bHLH protein family.

Atypical and probable non DNA-binding bHLH transcription factor that integrates multiple signaling pathways to regulate cell elongation and plant development. This is Transcription factor ILI2 (ILI2) from Oryza sativa subsp. indica (Rice).